The following is a 238-amino-acid chain: MLALDKVRYEYEHEWFEFDLNVADGDIVALMGPSGAGKSTLLSLVAGFIEPVSGSIKVNDQSVLGLAPYQRPFSMLFQEHNLFAHLTVRENIGLGLHPGLKLNAEQKQQVVDAAQQVGIADYLDRLPEQLSGGQRQRVALARCFVQPNPIWLLDEPFSALDPLLREEMLALVKQLASERQRTVVMVTHHLSDARAIASQIAFLSQGKVKVVSDCQAVTAQHPHPELAQFVAAALNEPK.

One can recognise an ABC transporter domain in the interval 2–230; the sequence is LALDKVRYEY…HPHPELAQFV (229 aa). 32–39 contacts ATP; it reads GPSGAGKS.

The protein belongs to the ABC transporter superfamily. Thiamine importer (TC 3.A.1.19.1) family. The complex is composed of two ATP-binding proteins (ThiQ), two transmembrane proteins (ThiP) and a solute-binding protein (ThiB).

The protein localises to the cell inner membrane. It catalyses the reaction thiamine(out) + ATP + H2O = thiamine(in) + ADP + phosphate + H(+). Functionally, part of the ABC transporter complex ThiBPQ involved in thiamine import. Responsible for energy coupling to the transport system. In Vibrio cholerae serotype O1 (strain ATCC 39315 / El Tor Inaba N16961), this protein is Thiamine import ATP-binding protein ThiQ.